The primary structure comprises 305 residues: Olfactory receptor 4F17 (305 aa).

Topologically, residues 1–18 are extracellular; the sequence is MVTEFIFLGLSDSQGLQT. The helical transmembrane segment at 19–42 threads the bilayer; the sequence is FLFMLFFVFYGGIVFGNLLIVITV. At 43 to 50 the chain is on the cytoplasmic side; it reads VSDSHLHS. The helical transmembrane segment at 51-72 threads the bilayer; sequence PMYFLLANLSLIDLSLSSVTAP. Topologically, residues 73 to 93 are extracellular; sequence KMITDFFSQRKVISFKGCLVQ. A disulfide bridge links cysteine 90 with cysteine 182. Residues 94–113 traverse the membrane as a helical segment; that stretch reads IFLLHFFGGSEMVILIAMGF. Topologically, residues 114 to 132 are cytoplasmic; sequence DRYIAICKPLHYTTIMCGN. A helical transmembrane segment spans residues 133-151; sequence ACVGIMAVAWGIGFLHSVS. At 152 to 188 the chain is on the extracellular side; that stretch reads QLAFAVHLPFCGPNEVDSFYCDLPRVIKLACTDTYRL. The helical transmembrane segment at 189 to 212 threads the bilayer; it reads DIMVIANSGVLTVCSFVLLIISYT. Residues 213–228 lie on the Cytoplasmic side of the membrane; that stretch reads IILMTIQHRPLDKSSK. The helical transmembrane segment at 229-251 threads the bilayer; that stretch reads ALSTLTAHITVVLLFFGPCVFIY. The Extracellular segment spans residues 252-262; sequence AWPFPIKSLDK. Residues 263–282 form a helical membrane-spanning segment; it reads FLAVFYSVITPLLNPIIYTL. Residues 283–305 lie on the Cytoplasmic side of the membrane; the sequence is RNKDMKTAIRQLRKWDAHSSVKF.

The protein belongs to the G-protein coupled receptor 1 family.

It is found in the cell membrane. In terms of biological role, odorant receptor. This Homo sapiens (Human) protein is Olfactory receptor 4F17 (OR4F17).